The following is a 361-amino-acid chain: Aromatic amino acid aminotransferase (361 aa).

Position 215 is an N6-(pyridoxal phosphate)lysine (Lys215).

The protein belongs to the class-II pyridoxal-phosphate-dependent aminotransferase family. In terms of assembly, homodimer. Pyridoxal 5'-phosphate is required as a cofactor.

It catalyses the reaction an aromatic L-alpha-amino acid + 2-oxoglutarate = an aromatic oxo-acid + L-glutamate. Aminotransferase that catalyzes the conversion of aromatic amino acids and 2-oxoglutarate into corresponding aromatic oxo acids and L-glutamate. The polypeptide is Aromatic amino acid aminotransferase (Mycolicibacterium smegmatis (strain ATCC 700084 / mc(2)155) (Mycobacterium smegmatis)).